The following is a 481-amino-acid chain: MQWEVVIGLEIHTQLATQSKIFSGSATTFGSEPNTQASLVDLGMPGVLPVLNQEAVRMACMFGLAIDAQIGKRNVFARKNYFYPDLPKGYQISQMDLPIVGKGHLDIALEDGTIKRIGVTRAHLEEDAGKSLHEDFSGSTGIDLNRAGTPLLEIVSEPDMRSAKEAVAYVKAIHALVRYLGICDGNMAEGSLRCDCNVSIRPKGQAEFGTRCEIKNVNSFRFIERAINSEIQRQIDLIEDGGKVVQETRLYDPNKDETRSMRSKEEANDYRYFPDPDLLPVVIEDSFLETIRTGLPELPPQKVERFQSQYGLSAYDANVLASSREQADYFEQVVKIGGDAKLAANWVMVELGSLLNKLGIEIDQAPVSAEQLGGMLLRIRDNTISGKIAKTVFEAMAAGEGDADSIIESKGLKQVTDTGAIDKMLDEVLAANAEQVEQYRAADEAKRGKMFGFFVGQAMKASKGKANPGQVNQLLKAKLEG.

Belongs to the GatB/GatE family. GatB subfamily. In terms of assembly, heterotrimer of A, B and C subunits.

It catalyses the reaction L-glutamyl-tRNA(Gln) + L-glutamine + ATP + H2O = L-glutaminyl-tRNA(Gln) + L-glutamate + ADP + phosphate + H(+). The enzyme catalyses L-aspartyl-tRNA(Asn) + L-glutamine + ATP + H2O = L-asparaginyl-tRNA(Asn) + L-glutamate + ADP + phosphate + 2 H(+). Functionally, allows the formation of correctly charged Asn-tRNA(Asn) or Gln-tRNA(Gln) through the transamidation of misacylated Asp-tRNA(Asn) or Glu-tRNA(Gln) in organisms which lack either or both of asparaginyl-tRNA or glutaminyl-tRNA synthetases. The reaction takes place in the presence of glutamine and ATP through an activated phospho-Asp-tRNA(Asn) or phospho-Glu-tRNA(Gln). This Pseudomonas putida (strain W619) protein is Aspartyl/glutamyl-tRNA(Asn/Gln) amidotransferase subunit B.